The primary structure comprises 66 residues: DNA gyrase inhibitor YacG (66 aa).

Zn(2+) is bound by residues Cys9, Cys12, Cys28, and Cys32. The tract at residues 45 to 66 is disordered; that stretch reads HKIAGAEESEDELYSGDLEPRH.

Belongs to the DNA gyrase inhibitor YacG family. As to quaternary structure, interacts with GyrB. Zn(2+) serves as cofactor.

Inhibits all the catalytic activities of DNA gyrase by preventing its interaction with DNA. Acts by binding directly to the C-terminal domain of GyrB, which probably disrupts DNA binding by the gyrase. In Pseudomonas entomophila (strain L48), this protein is DNA gyrase inhibitor YacG.